Consider the following 378-residue polypeptide: 1-acyl-sn-glycerol-3-phosphate acyltransferase delta (378 aa).

The chain crosses the membrane as a helical span at residues 11 to 31; it reads FLCHLVFCYVFIASGLIVNAI. Residues 96–101 carry the HXXXXD motif motif; sequence HKFEID. Helical transmembrane passes span 125–145, 311–331, and 338–358; these read ELAYVPIIGWMWYFVEMIFCT, WLFWASLLLYPFFQFLVSMVS, and LASLVLIFCMASMGVRWMIGV.

Belongs to the 1-acyl-sn-glycerol-3-phosphate acyltransferase family. Expressed at a high levels in the brain, at intermediate or low levels in skeletal muscles, gut, kidney, spleen and lung. Barely detectable in heart and liver.

It is found in the endoplasmic reticulum membrane. The enzyme catalyses a 1-acyl-sn-glycero-3-phosphate + an acyl-CoA = a 1,2-diacyl-sn-glycero-3-phosphate + CoA. It catalyses the reaction (4Z,7Z,10Z,13Z,16Z,19Z)-docosahexaenoyl-CoA + 1-hexadecanoyl-sn-glycero-3-phosphate = 1-hexadecanoyl-2-(4Z,7Z,10Z,13Z,16Z,19Z-docosahexaenoyl)-sn-glycero-3-phosphate + CoA. It carries out the reaction 1-octadecanoyl-sn-glycero-3-phosphate + (9Z,12Z)-octadecadienoyl-CoA = 1-octadecanoyl-2-(9Z,12Z-octadecadienoyl)-sn-glycero-3-phosphate + CoA. The catalysed reaction is 1-octadecanoyl-sn-glycero-3-phosphate + (4Z,7Z,10Z,13Z,16Z,19Z)-docosahexaenoyl-CoA = 1-octadecanoyl-2-(4Z,7Z,10Z,13Z,16Z,19Z-docosahexaenoyl)-sn-glycero-3-phosphate + CoA. The enzyme catalyses (4Z,7Z,10Z,13Z,16Z,19Z)-docosahexaenoyl-CoA + 1-(9Z-octadecenoyl)-sn-glycero-3-phosphate = 1-(9Z-octadecenoyl)-2-(4Z,7Z,10Z,13Z,16Z,19Z-docosahexaenoyl)-sn-glycero-3-phosphate + CoA. It participates in phospholipid metabolism; CDP-diacylglycerol biosynthesis; CDP-diacylglycerol from sn-glycerol 3-phosphate: step 2/3. Its function is as follows. Converts 1-acyl-sn-glycerol-3-phosphate (lysophosphatidic acid or LPA) into 1,2-diacyl-sn-glycerol-3-phosphate (phosphatidic acid or PA) by incorporating an acyl moiety at the sn-2 position of the glycerol backbone. Exhibits high acyl-CoA specificity for polyunsaturated fatty acyl-CoA, especially docosahexaenoyl-CoA (22:6-CoA, DHA-CoA). This is 1-acyl-sn-glycerol-3-phosphate acyltransferase delta (Agpat4) from Mus musculus (Mouse).